A 47-amino-acid polypeptide reads, in one-letter code: uncharacterized protein (47 aa).

This is an uncharacterized protein from Bacillus subtilis (strain 168).